We begin with the raw amino-acid sequence, 185 residues long: Virulence membrane protein PagC (185 aa).

The signal sequence occupies residues 1-23 (MKNIILSTLVITTSVLVVNVAQA).

Belongs to the outer membrane OOP (TC 1.B.6) superfamily. Ail family.

Its subcellular location is the cell outer membrane. Its function is as follows. Essential for full virulence and survival within macrophages. The protein is Virulence membrane protein PagC (pagC) of Salmonella typhimurium (strain LT2 / SGSC1412 / ATCC 700720).